A 476-amino-acid polypeptide reads, in one-letter code: Aspartyl/glutamyl-tRNA(Asn/Gln) amidotransferase subunit B (476 aa).

The protein belongs to the GatB/GatE family. GatB subfamily. Heterotrimer of A, B and C subunits.

The enzyme catalyses L-glutamyl-tRNA(Gln) + L-glutamine + ATP + H2O = L-glutaminyl-tRNA(Gln) + L-glutamate + ADP + phosphate + H(+). The catalysed reaction is L-aspartyl-tRNA(Asn) + L-glutamine + ATP + H2O = L-asparaginyl-tRNA(Asn) + L-glutamate + ADP + phosphate + 2 H(+). Its function is as follows. Allows the formation of correctly charged Asn-tRNA(Asn) or Gln-tRNA(Gln) through the transamidation of misacylated Asp-tRNA(Asn) or Glu-tRNA(Gln) in organisms which lack either or both of asparaginyl-tRNA or glutaminyl-tRNA synthetases. The reaction takes place in the presence of glutamine and ATP through an activated phospho-Asp-tRNA(Asn) or phospho-Glu-tRNA(Gln). The chain is Aspartyl/glutamyl-tRNA(Asn/Gln) amidotransferase subunit B from Thermosipho melanesiensis (strain DSM 12029 / CIP 104789 / BI429).